The chain runs to 400 residues: CinA-like protein (400 aa).

This sequence belongs to the CinA family.

The protein is CinA-like protein of Escherichia coli (strain 55989 / EAEC).